The sequence spans 264 residues: Probable DNA polymerase sliding clamp 2 (264 aa).

A DNA-binding region spans residues 75 to 94 (SIAQEATVGIKISNFVRILD).

This sequence belongs to the PCNA family.

Sliding clamp subunit. Responsible for tethering the catalytic subunit of DNA polymerase to DNA during high-speed replication. This Paramecium bursaria Chlorella virus 1 (PBCV-1) protein is Probable DNA polymerase sliding clamp 2.